Consider the following 258-residue polypeptide: Probable pectin methylesterase CGR3 (258 aa).

Residues 1-29 (MSRRQVRRVGDSGSFPFVGALHSKSRSSP) lie on the Cytoplasmic side of the membrane. Residues 30-50 (LLSVCLVLVGACLLIGYAYSG) form a helical membrane-spanning segment. The Lumenal segment spans residues 51–258 (PGMFKSIREV…CQVFHLKPLH (208 aa)). Asn171 is a glycosylation site (N-linked (GlcNAc...) asparagine).

Belongs to the class I-like SAM-binding methyltransferase superfamily.

Its subcellular location is the golgi apparatus membrane. In terms of biological role, together with CGR2, required for homogalacturonan pectins (HG) methylesterification in the Golgi apparatus prior to integration into cell walls, essential for general growth and development. Promotes petiole elongation. Impacts photosynthesis and respiration efficiency by influencing leaf mesophyll morphology and physiology; pectin methylesterification modulates both expansion and positioning of cells in leaves, probably by changing cell walls plasticity. This Arabidopsis thaliana (Mouse-ear cress) protein is Probable pectin methylesterase CGR3.